Consider the following 171-residue polypeptide: Glutamyl-tRNA(Gln) amidotransferase subunit F, mitochondrial (171 aa).

This sequence belongs to the GatF family. In terms of assembly, subunit of the heterotrimeric GatFAB amidotransferase (AdT) complex, composed of A, B and F subunits.

The protein localises to the mitochondrion inner membrane. The enzyme catalyses L-glutamyl-tRNA(Gln) + L-glutamine + ATP + H2O = L-glutaminyl-tRNA(Gln) + L-glutamate + ADP + phosphate + H(+). In terms of biological role, allows the formation of correctly charged Gln-tRNA(Gln) through the transamidation of misacylated Glu-tRNA(Gln) in the mitochondria. The reaction takes place in the presence of glutamine and ATP through an activated gamma-phospho-Glu-tRNA(Gln). Required for proper protein synthesis within the mitochondrion. The protein is Glutamyl-tRNA(Gln) amidotransferase subunit F, mitochondrial of Zygosaccharomyces rouxii (strain ATCC 2623 / CBS 732 / NBRC 1130 / NCYC 568 / NRRL Y-229).